The primary structure comprises 418 residues: Centromere protein U (418 aa).

Over residues 1–11 the composition is skewed to basic residues; sequence MAPRGRRRPRP. Residues 1–76 form a disordered region; that stretch reads MAPRGRRRPR…TYETFDPPLH (76 aa). A Nuclear localization signal motif is present at residues 6–23; sequence RRRPRPHRSEGARRSKNT. A compositionally biased stretch (basic and acidic residues) spans 12 to 42; the sequence is HRSEGARRSKNTLERTHSMKDKAGQKCKPID. Position 78 is a phosphothreonine; by PLK1 (Thr78). The segment at 88-227 is disordered; that stretch reads SKHCGLSLSS…KRKKSRSKAI (140 aa). The residue at position 98 (Thr98) is a Phosphothreonine. Ser108 is subject to Phosphoserine. Thr110 bears the Phosphothreonine mark. Residues Ser111, Ser116, and Ser120 each carry the phosphoserine modification. Basic residues predominate over residues 124 to 133; it reads SAKKPGRKLR. A phosphoserine mark is found at Ser136, Ser139, and Ser141. A compositionally biased stretch (basic and acidic residues) spans 145–165; it reads SDTRRKVKSAEKISTQRHEVI. The span at 180–193 shows a compositional bias: polar residues; it reads SVTSKKTGPLSAQP. A Glycyl lysine isopeptide (Lys-Gly) (interchain with G-Cter in SUMO2) cross-link involves residue Lys185. Ser190 and Ser194 each carry phosphoserine. Over residues 208–224 the composition is skewed to basic residues; that stretch reads TQKKGKISHDKRKKSRS. A Phosphoserine modification is found at Ser232. 2 coiled-coil regions span residues 297 to 356 and 397 to 417; these read QMLT…NAAY and LLGAESHLRNINHQLEKLLDQ. The Nuclear localization signal signature appears at 303-320; the sequence is KRKNAKMISDIEKKRQRM.

This sequence belongs to the CENP-U/AME1 family. Component of the CENPA-NAC complex, at least composed of CENPA, CENPC, CENPH, CENPM, CENPN, CENPT and CENPU. The CENPA-NAC complex interacts with the CENPA-CAD complex, composed of CENPI, CENPK, CENPL, CENPO, CENPP, CENPQ, CENPR and CENPS. Interacts with MLF1. Interacts with PLK1. As to quaternary structure, (Microbial infection) Interacts with the N-terminal domain of Kaposi's sarcoma-associated herpesvirus latent nuclear antigen (LNA). Post-translationally, phosphorylated by PLK1 at Thr-78, creating a self-tethering site that specifically interacts with the polo-box domain of PLK1. In terms of tissue distribution, expressed at high levels in the testis, fetal liver, thymus, bone marrow and at lower levels in the lymph nodes, placenta, colon and spleen. Present in all cell lines examined, including B-cells, T-cells, epithelial cells and fibroblast cells. Expressed at high levels in glioblastoma cell lines.

It localises to the cytoplasm. The protein resides in the nucleus. The protein localises to the chromosome. It is found in the centromere. Its subcellular location is the kinetochore. In terms of biological role, component of the CENPA-NAC (nucleosome-associated) complex, a complex that plays a central role in assembly of kinetochore proteins, mitotic progression and chromosome segregation. The CENPA-NAC complex recruits the CENPA-CAD (nucleosome distal) complex and may be involved in incorporation of newly synthesized CENPA into centromeres. Plays an important role in the correct PLK1 localization to the mitotic kinetochores. A scaffold protein responsible for the initial recruitment and maintenance of the kinetochore PLK1 population until its degradation. Involved in transcriptional repression. The polypeptide is Centromere protein U (CENPU) (Homo sapiens (Human)).